We begin with the raw amino-acid sequence, 102 residues long: RNA-binding protein Hfq (102 aa).

Positions 9 to 68 (DPFLNALRRERVPVSIYLVNGIKLQGQIESFDQFVILLKNTVSQMVYKHAISTVVPSRPV) constitute a Sm domain. Residues 63-102 (VPSRPVSHHSNNASGGTSSNYHHGSSAQNTSAQQDSEETE) are disordered. Over residues 70-96 (HHSNNASGGTSSNYHHGSSAQNTSAQQ) the composition is skewed to polar residues.

Belongs to the Hfq family. In terms of assembly, homohexamer.

Its function is as follows. RNA chaperone that binds small regulatory RNA (sRNAs) and mRNAs to facilitate mRNA translational regulation in response to envelope stress, environmental stress and changes in metabolite concentrations. Also binds with high specificity to tRNAs. The protein is RNA-binding protein Hfq of Shigella boydii serotype 18 (strain CDC 3083-94 / BS512).